A 493-amino-acid polypeptide reads, in one-letter code: MASGILVNVKEEVTCPICLELLTQPLSLDCGHSFCQACLTANHKKSTLDKGERSCPVCRVSYQPKNIRPNRHVANIVEKLREVKLSPEGQKVDHCARHGEKLLLFCKEDGKVICWLCERSQEHRGHHTFLTEEVAQKYQVKLQAALEMLRQKQQEAEELEADIREEKASWKTQIQYDKTSVLADFEQLRDILDWEESNELQNLEKEEEDILKSLTKSETEMVQQTQSVRELISDVEHRLQGSVMELLQGVDGIIKRMQNVTLKKPETFPKNQRRVFRAPNLKGMLEVFRELTDVRRYWVDVTVAPNDISYAVISEDMRQVSCPEPQITYGAQGTTYQTYVNFNYCTGILGSQSITSGKHYWEVNVSKKSAWILGVCAGFQPDAMYNIEQNENYQPQYGYWVIGLEEGVKCSAFQDGSFHNPSAPFIVPLSVIICPDRVGVFLDYEACTVSFFNITNHGFLIYKFSHCSFSQPVFPYLNPRKCRVPMTLCSPSS.

Residue alanine 2 is modified to N-acetylalanine. The segment at 15-59 adopts an RING-type zinc-finger fold; sequence CPICLELLTQPLSLDCGHSFCQACLTANHKKSTLDKGERSCPVCR. Serine 86 is subject to Phosphoserine. The segment at 90–132 adopts a B box-type zinc-finger fold; it reads QKVDHCARHGEKLLLFCKEDGKVICWLCERSQEHRGHHTFLTE. Residues cysteine 95, histidine 98, cysteine 117, and histidine 123 each coordinate Zn(2+). Positions 131–223 form a coiled coil; it reads TEEVAQKYQV…LTKSETEMVQ (93 aa). Positions 185–198 are required for interaction with GABARAP and for autophagy; that stretch reads FEQLRDILDWEESN. A B30.2/SPRY domain is found at 281–493; that stretch reads LKGMLEVFRE…VPMTLCSPSS (213 aa).

It belongs to the TRIM/RBCC family. Can form homodimers and homotrimers. In addition to lower-order dimerization, also exhibits a higher-order multimerization and both low- and high-order multimerizations are essential for its restriction activity. Interacts with BTBD1 and BTBD2. Interacts with PSMC4, PSMC5, PSMD7 and HSPA8/HSC70. Interacts (via B30.2/SPRY domain) with HSPA1A/B. Interacts with PSMC2, MAP3K7/TAK1, TAB2 and TAB3. Interacts with SQSTM1. Interacts with TRIM6 and TRIM34. Interacts with ULK1 (phosphorylated form), GABARAP, GABARAPL1, GABARAPL2, MAP1LC3A, MAP1LC3C and BECN1. Post-translationally, degraded in a proteasome-independent fashion in the absence of viral infection but in a proteasome-dependent fashion following exposure to restriction sensitive virus. In terms of processing, autoubiquitinated in a RING finger- and UBE2D2-dependent manner. Monoubiquitinated by TRIM21. Deubiquitinated by Yersinia YopJ. Ubiquitination may not lead to proteasomal degradation.

Its subcellular location is the cytoplasm. It localises to the nucleus. The catalysed reaction is S-ubiquitinyl-[E2 ubiquitin-conjugating enzyme]-L-cysteine + [acceptor protein]-L-lysine = [E2 ubiquitin-conjugating enzyme]-L-cysteine + N(6)-ubiquitinyl-[acceptor protein]-L-lysine.. The protein operates within protein modification; protein ubiquitination. Its function is as follows. Capsid-specific restriction factor that prevents infection from non-host-adapted retroviruses. Blocks viral replication early in the life cycle, after viral entry but before reverse transcription. In addition to acting as a capsid-specific restriction factor, also acts as a pattern recognition receptor that activates innate immune signaling in response to the retroviral capsid lattice. Binding to the viral capsid triggers its E3 ubiquitin ligase activity, and in concert with the heterodimeric ubiquitin conjugating enzyme complex UBE2V1-UBE2N (also known as UBC13-UEV1A complex) generates 'Lys-63'-linked polyubiquitin chains, which in turn are catalysts in the autophosphorylation of the MAP3K7/TAK1 complex (includes TAK1, TAB2, and TAB3). Activation of the MAP3K7/TAK1 complex by autophosphorylation results in the induction and expression of NF-kappa-B and MAPK-responsive inflammatory genes, thereby leading to an innate immune response in the infected cell. Plays a role in regulating autophagy through activation of autophagy regulator BECN1 by causing its dissociation from its inhibitors BCL2 and TAB2. In Pongo abelii (Sumatran orangutan), this protein is Tripartite motif-containing protein 5 (TRIM5).